The sequence spans 238 residues: Pyridoxine 5'-phosphate synthase (238 aa).

3-amino-2-oxopropyl phosphate is bound at residue Asn7. 9-10 (DH) provides a ligand contact to 1-deoxy-D-xylulose 5-phosphate. A 3-amino-2-oxopropyl phosphate-binding site is contributed by Arg18. Catalysis depends on His43, which acts as the Proton acceptor. Positions 45 and 50 each coordinate 1-deoxy-D-xylulose 5-phosphate. Glu70 functions as the Proton acceptor in the catalytic mechanism. 1-deoxy-D-xylulose 5-phosphate is bound at residue Thr100. The active-site Proton donor is His190. Residues Gly191 and 212-213 (GH) each bind 3-amino-2-oxopropyl phosphate.

The protein belongs to the PNP synthase family. In terms of assembly, homooctamer; tetramer of dimers.

It is found in the cytoplasm. The catalysed reaction is 3-amino-2-oxopropyl phosphate + 1-deoxy-D-xylulose 5-phosphate = pyridoxine 5'-phosphate + phosphate + 2 H2O + H(+). It participates in cofactor biosynthesis; pyridoxine 5'-phosphate biosynthesis; pyridoxine 5'-phosphate from D-erythrose 4-phosphate: step 5/5. Catalyzes the complicated ring closure reaction between the two acyclic compounds 1-deoxy-D-xylulose-5-phosphate (DXP) and 3-amino-2-oxopropyl phosphate (1-amino-acetone-3-phosphate or AAP) to form pyridoxine 5'-phosphate (PNP) and inorganic phosphate. In Prochlorococcus marinus (strain AS9601), this protein is Pyridoxine 5'-phosphate synthase.